We begin with the raw amino-acid sequence, 379 residues long: Lipoyl synthase, mitochondrial (379 aa).

[4Fe-4S] cluster contacts are provided by cysteine 94, cysteine 99, cysteine 105, cysteine 126, cysteine 130, cysteine 133, and serine 342. The region spanning 109-331 (GEDNGAATAT…EKEAMSMGFL (223 aa)) is the Radical SAM core domain.

The protein belongs to the radical SAM superfamily. Lipoyl synthase family. [4Fe-4S] cluster serves as cofactor.

The protein localises to the mitochondrion. It carries out the reaction [[Fe-S] cluster scaffold protein carrying a second [4Fe-4S](2+) cluster] + N(6)-octanoyl-L-lysyl-[protein] + 2 oxidized [2Fe-2S]-[ferredoxin] + 2 S-adenosyl-L-methionine + 4 H(+) = [[Fe-S] cluster scaffold protein] + N(6)-[(R)-dihydrolipoyl]-L-lysyl-[protein] + 4 Fe(3+) + 2 hydrogen sulfide + 2 5'-deoxyadenosine + 2 L-methionine + 2 reduced [2Fe-2S]-[ferredoxin]. It functions in the pathway protein modification; protein lipoylation via endogenous pathway; protein N(6)-(lipoyl)lysine from octanoyl-[acyl-carrier-protein]: step 2/2. Catalyzes the radical-mediated insertion of two sulfur atoms into the C-6 and C-8 positions of the octanoyl moiety bound to the lipoyl domains of lipoate-dependent enzymes, thereby converting the octanoylated domains into lipoylated derivatives. This is Lipoyl synthase, mitochondrial from Leishmania braziliensis.